Here is a 327-residue protein sequence, read N- to C-terminus: Sphingomyelinase D (327 aa).

A signal peptide spans 1 to 23 (MQPLTRTICALFCLLLTLPLTFG). Residue His-52 is part of the active site. The Mg(2+) site is built by Glu-72, Asp-74, and Asp-117. The short motif at 320 to 327 (VTGADKLW) is the SMD-tail element.

This sequence belongs to the sphingomyelinase D/phospholipase D family. Mg(2+) serves as cofactor.

It localises to the secreted. The catalysed reaction is a sphingomyelin + H2O = an N-acylsphing-4-enine 1-phosphate + choline + H(+). Its function is as follows. Catalyzes the hydrolysis of sphingomyelin. Sphingomyelinases D are produced by some spider in their venoms, but also by arthropods such as ticks, or pathogenic bacteria and fungi. They might play a role in pathogenicity through different mechanisms, such as membrane destabilization and host cell penetration, but also pulmonary inflammation and cutaneous lesions. This Paracoccidioides brasiliensis (strain Pb03) protein is Sphingomyelinase D.